The chain runs to 75 residues: UPF0352 protein CKO_00587 (75 aa).

The protein belongs to the UPF0352 family.

The polypeptide is UPF0352 protein CKO_00587 (Citrobacter koseri (strain ATCC BAA-895 / CDC 4225-83 / SGSC4696)).